Consider the following 332-residue polypeptide: MSRDRGARGLRKYGRFALATGAATALSLTASGCVVVHGEREVLPAAKKSEATRALAGFLTAYNKAQKANDRSLDAGRVTGALADIDGAKLEAGHKTAPAGNTDYTPLKLTDAKFAIPAKAGWPRWFVADTASNRDKNRWVLVFTRGSANDVWQVSYLTALAPADVPRFKKDKDGWAEPVTADDAALAVRPQKLGAAYATYLKSGGDTFADGRFTSGLRAGRKKNASKPGLARQYMDEPLNSGDHAPLGLRTTDGGALVFFVTHHYEKQTAAQGVNITVNDPNIKALMTGDPKQSLTMEFVSNQAVLDPAKGSGDQRVTFLSKVAGLTAAKGE.

Residues 1-32 (MSRDRGARGLRKYGRFALATGAATALSLTASG) form the signal peptide. The N-palmitoyl cysteine moiety is linked to residue cysteine 33. Cysteine 33 carries S-diacylglycerol cysteine lipidation.

The protein localises to the cell membrane. This is an uncharacterized protein from Streptomyces avermitilis (strain ATCC 31267 / DSM 46492 / JCM 5070 / NBRC 14893 / NCIMB 12804 / NRRL 8165 / MA-4680).